The primary structure comprises 743 residues: Beta-galactosidase (743 aa).

Glu-388 functions as the Proton donor in the catalytic mechanism. Glu-453 acts as the Nucleophile in catalysis.

It belongs to the glycosyl hydrolase 2 family. In terms of assembly, homodimer.

It carries out the reaction Hydrolysis of terminal non-reducing beta-D-galactose residues in beta-D-galactosides.. Its function is as follows. Beta-galactosidase. The protein is Beta-galactosidase (lacZ) of Thermoanaerobacter pseudethanolicus (strain ATCC 33223 / 39E) (Clostridium thermohydrosulfuricum).